Here is a 387-residue protein sequence, read N- to C-terminus: Chaperone protein DnaJ (387 aa).

The 66-residue stretch at 5-70 (DYYEVLGVAK…QKRAAYDRFG (66 aa)) folds into the J domain. The segment at 140–218 (GKTETIRLPT…CGGAGRVTRE (79 aa)) adopts a CR-type zinc-finger fold. Zn(2+) contacts are provided by C153, C156, C170, C173, C192, C195, C206, and C209. CXXCXGXG motif repeat units follow at residues 153-160 (CEVCAGSG), 170-177 (CPTCGGYG), 192-199 (CPNCQGRG), and 206-213 (CAACGGAG).

This sequence belongs to the DnaJ family. In terms of assembly, homodimer. Requires Zn(2+) as cofactor.

Its subcellular location is the cytoplasm. Functionally, participates actively in the response to hyperosmotic and heat shock by preventing the aggregation of stress-denatured proteins and by disaggregating proteins, also in an autonomous, DnaK-independent fashion. Unfolded proteins bind initially to DnaJ; upon interaction with the DnaJ-bound protein, DnaK hydrolyzes its bound ATP, resulting in the formation of a stable complex. GrpE releases ADP from DnaK; ATP binding to DnaK triggers the release of the substrate protein, thus completing the reaction cycle. Several rounds of ATP-dependent interactions between DnaJ, DnaK and GrpE are required for fully efficient folding. Also involved, together with DnaK and GrpE, in the DNA replication of plasmids through activation of initiation proteins. This Methylobacterium sp. (strain 4-46) protein is Chaperone protein DnaJ.